The chain runs to 438 residues: Alpha-methylserine aldolase (438 aa).

K252 carries the N6-(pyridoxal phosphate)lysine modification.

Belongs to the SHMT family. Alpha-methylserine aldolase subfamily. In terms of assembly, homodimer. Pyridoxal 5'-phosphate serves as cofactor.

It catalyses the reaction 2-methyl-L-serine = formaldehyde + L-alanine. Its activity is regulated as follows. In the alpha-methyl-L-serine synthesis reaction, activity is inhibited by an excess amount of formaldehyde (at a concentration greater than 10 mM). Functionally, catalyzes the reversible interconversion of alpha-methyl-L-serine to L-alanine and formaldehyde. Cannot use alpha-methyl-D-serine, L-serine or D-serine. Cannot use D-alanine instead of L-alanine as the substrate for alpha-methyl-L-serine synthesis. Does not require tetrahydrofolate (THF) for activity. This chain is Alpha-methylserine aldolase, found in Ralstonia sp.